Reading from the N-terminus, the 1414-residue chain is DNA-directed RNA polymerase subunit beta' (1414 aa).

Positions 70, 72, 85, and 88 each coordinate Zn(2+). Residues D460, D462, and D464 each coordinate Mg(2+). C814, C888, C895, and C898 together coordinate Zn(2+). The segment covering 1392–1403 (EQALSEALKSSA) has biased composition (low complexity). Residues 1392–1414 (EQALSEALKSSAPQEAKAAQKDE) are disordered.

Belongs to the RNA polymerase beta' chain family. In terms of assembly, the RNAP catalytic core consists of 2 alpha, 1 beta, 1 beta' and 1 omega subunit. When a sigma factor is associated with the core the holoenzyme is formed, which can initiate transcription. Requires Mg(2+) as cofactor. It depends on Zn(2+) as a cofactor.

The catalysed reaction is RNA(n) + a ribonucleoside 5'-triphosphate = RNA(n+1) + diphosphate. In terms of biological role, DNA-dependent RNA polymerase catalyzes the transcription of DNA into RNA using the four ribonucleoside triphosphates as substrates. This Coxiella burnetii (strain Dugway 5J108-111) protein is DNA-directed RNA polymerase subunit beta'.